We begin with the raw amino-acid sequence, 273 residues long: Imidazole glycerol phosphate synthase subunit HisF (273 aa).

Catalysis depends on residues Asp-11 and Asp-134.

This sequence belongs to the HisA/HisF family. In terms of assembly, heterodimer of HisH and HisF.

The protein resides in the cytoplasm. It carries out the reaction 5-[(5-phospho-1-deoxy-D-ribulos-1-ylimino)methylamino]-1-(5-phospho-beta-D-ribosyl)imidazole-4-carboxamide + L-glutamine = D-erythro-1-(imidazol-4-yl)glycerol 3-phosphate + 5-amino-1-(5-phospho-beta-D-ribosyl)imidazole-4-carboxamide + L-glutamate + H(+). It participates in amino-acid biosynthesis; L-histidine biosynthesis; L-histidine from 5-phospho-alpha-D-ribose 1-diphosphate: step 5/9. Its function is as follows. IGPS catalyzes the conversion of PRFAR and glutamine to IGP, AICAR and glutamate. The HisF subunit catalyzes the cyclization activity that produces IGP and AICAR from PRFAR using the ammonia provided by the HisH subunit. The polypeptide is Imidazole glycerol phosphate synthase subunit HisF (Methanococcoides burtonii (strain DSM 6242 / NBRC 107633 / OCM 468 / ACE-M)).